The chain runs to 63 residues: MPFAQIYMLEGRSEEQKKAVIEKVTRALVEAVGAPSANVRVWIHDVPKENWGIAGVSAKELGR.

Residue proline 2 is the Proton acceptor; via imino nitrogen of the active site.

This sequence belongs to the 4-oxalocrotonate tautomerase family. Homohexamer.

It catalyses the reaction (2Z,4E)-2-hydroxyhexa-2,4-dienedioate = (3E)-2-oxohex-3-enedioate. Its pathway is aromatic compound metabolism; salicylate degradation. Functionally, catalyzes the ketonization of 2-hydroxymuconate stereoselectively to yield 2-oxo-3-hexenedioate. The polypeptide is 2-hydroxymuconate tautomerase (aphI) (Comamonas testosteroni (Pseudomonas testosteroni)).